The sequence spans 138 residues: ATP synthase epsilon chain (138 aa).

Belongs to the ATPase epsilon chain family. In terms of assembly, F-type ATPases have 2 components, CF(1) - the catalytic core - and CF(0) - the membrane proton channel. CF(1) has five subunits: alpha(3), beta(3), gamma(1), delta(1), epsilon(1). CF(0) has three main subunits: a, b and c.

Its subcellular location is the cell inner membrane. Its function is as follows. Produces ATP from ADP in the presence of a proton gradient across the membrane. The polypeptide is ATP synthase epsilon chain (Geotalea daltonii (strain DSM 22248 / JCM 15807 / FRC-32) (Geobacter daltonii)).